The primary structure comprises 502 residues: Probable glycine dehydrogenase (decarboxylating) subunit 2 (502 aa).

At K273 the chain carries N6-(pyridoxal phosphate)lysine.

Belongs to the GcvP family. C-terminal subunit subfamily. In terms of assembly, the glycine cleavage system is composed of four proteins: P, T, L and H. In this organism, the P 'protein' is a heterodimer of two subunits. It depends on pyridoxal 5'-phosphate as a cofactor.

The enzyme catalyses N(6)-[(R)-lipoyl]-L-lysyl-[glycine-cleavage complex H protein] + glycine + H(+) = N(6)-[(R)-S(8)-aminomethyldihydrolipoyl]-L-lysyl-[glycine-cleavage complex H protein] + CO2. The glycine cleavage system catalyzes the degradation of glycine. The P protein binds the alpha-amino group of glycine through its pyridoxal phosphate cofactor; CO(2) is released and the remaining methylamine moiety is then transferred to the lipoamide cofactor of the H protein. The sequence is that of Probable glycine dehydrogenase (decarboxylating) subunit 2 from Pyrococcus abyssi (strain GE5 / Orsay).